Here is a 185-residue protein sequence, read N- to C-terminus: Ribonuclease HII (185 aa).

Residues Met1–Leu185 form the RNase H type-2 domain. A divalent metal cation contacts are provided by Asp7, Glu8, and Asp99.

The protein belongs to the RNase HII family. Mn(2+) serves as cofactor. Mg(2+) is required as a cofactor.

The protein localises to the cytoplasm. It carries out the reaction Endonucleolytic cleavage to 5'-phosphomonoester.. Functionally, endonuclease that specifically degrades the RNA of RNA-DNA hybrids. The chain is Ribonuclease HII from Francisella tularensis subsp. novicida (strain U112).